The following is a 145-amino-acid chain: Protein H2A.5 (145 aa).

The segment at 118-145 (SPAAAEKEAKSQKAAAKSPKKKTAATKE) is disordered. The SPKK motif signature appears at 135-138 (SPKK). Positions 135-145 (SPKKKTAATKE) are enriched in basic residues.

It belongs to the histone H2A family. In terms of assembly, the nucleosome is a histone octamer containing two molecules each of H2A, H2B, H3 and H4 assembled in one H3-H4 heterotetramer and two H2A-H2B heterodimers. The octamer wraps approximately 147 bp of DNA. Abundant in meristematic tissues.

The protein resides in the nucleus. It is found in the chromosome. Core component of nucleosome. Nucleosomes wrap and compact DNA into chromatin, limiting DNA accessibility to the cellular machineries which require DNA as a template. Histones thereby play a central role in transcription regulation, DNA repair, DNA replication and chromosomal stability. DNA accessibility is regulated via a complex set of post-translational modifications of histones, also called histone code, and nucleosome remodeling. This is Protein H2A.5 (H2A-2) from Triticum aestivum (Wheat).